The sequence spans 167 residues: Small ribosomal subunit protein uS5 (167 aa).

The S5 DRBM domain maps to 12-75; the sequence is LQEKLVQVNR…DAARKNMITV (64 aa).

The protein belongs to the universal ribosomal protein uS5 family. As to quaternary structure, part of the 30S ribosomal subunit. Contacts proteins S4 and S8.

Functionally, with S4 and S12 plays an important role in translational accuracy. Located at the back of the 30S subunit body where it stabilizes the conformation of the head with respect to the body. In Hahella chejuensis (strain KCTC 2396), this protein is Small ribosomal subunit protein uS5.